We begin with the raw amino-acid sequence, 178 residues long: Large ribosomal subunit protein uL10 (178 aa).

It belongs to the universal ribosomal protein uL10 family. As to quaternary structure, part of the ribosomal stalk of the 50S ribosomal subunit. The N-terminus interacts with L11 and the large rRNA to form the base of the stalk. The C-terminus forms an elongated spine to which L12 dimers bind in a sequential fashion forming a multimeric L10(L12)X complex.

Its function is as follows. Forms part of the ribosomal stalk, playing a central role in the interaction of the ribosome with GTP-bound translation factors. The protein is Large ribosomal subunit protein uL10 of Albidiferax ferrireducens (strain ATCC BAA-621 / DSM 15236 / T118) (Rhodoferax ferrireducens).